Consider the following 256-residue polypeptide: Alcohol dehydrogenase (256 aa).

12–35 (FVAGLGGIGLDTSKELLKRDLKNL) contributes to the NAD(+) binding site. Substrate is bound at residue Ser140. Tyr153 acts as the Proton acceptor in catalysis.

It belongs to the short-chain dehydrogenases/reductases (SDR) family. In terms of assembly, homodimer.

The catalysed reaction is a primary alcohol + NAD(+) = an aldehyde + NADH + H(+). The enzyme catalyses a secondary alcohol + NAD(+) = a ketone + NADH + H(+). This Drosophila sechellia (Fruit fly) protein is Alcohol dehydrogenase (Adh).